A 542-amino-acid polypeptide reads, in one-letter code: Neutral amino acid transporter B(0) (542 aa).

Met-1 carries the post-translational modification N-acetylmethionine. At 1–52 (MVADPPRGDSKGLAAAEPTANGGLALASIEDQGEAAGGCCGSRDRVRRCLRA) the chain is on the cytoplasmic side. The chain crosses the membrane as a helical span at residues 53-82 (NLLVLLTVVAVVVGVALGLGVSGAGGALAL). At 83–95 (GPERLSAFVFPGE) the chain is on the extracellular side. The helical transmembrane segment at 96 to 117 (LLLRLLRMIILPLVVCSLIGGA) threads the bilayer. Topologically, residues 118 to 131 (ASLDPGALGRLGAW) are cytoplasmic. Residues 132–154 (ALLFFLVTTLLASALGVALALAL) form a helical membrane-spanning segment. Topologically, residues 155 to 225 (QPGAASAAIN…GTRVKVPVGQ (71 aa)) are extracellular. Residues Asn-164 and Asn-213 are each glycosylated (N-linked (GlcNAc...) asparagine). The chain crosses the membrane as a helical span at residues 226–249 (EVEGMNILGLVVFAIVFGVALRKL). The Cytoplasmic segment spans residues 250–258 (GPEGELLIR). A helical transmembrane segment spans residues 259–286 (FFNSFNEATMVLVSWIMWYAPVGIMFLV). The Extracellular portion of the chain corresponds to 287-307 (AGKIVEMEDVGLLFARLGKYI). A helical transmembrane segment spans residues 308-329 (LCCLLGHAIHGLLVLPLIYFLF). Topologically, residues 330-334 (TRKNP) are cytoplasmic. Positions 335–365 (YRFLWGIVTPLATAFGTSSSSATLPLMMKCV) form an intramembrane region, discontinuously helical. Residues 366–374 (EENNGVAKH) lie on the Cytoplasmic side of the membrane. The chain crosses the membrane as a helical span at residues 375–401 (ISRFILPIGATVNMDGAALFQCVAAVF). 3 residues coordinate Na(+): Gly-383, Thr-385, and Asn-387. The Extracellular segment spans residues 402–414 (IAQLSEQSLDFVK). The discontinuously helical intramembrane region spans 415–448 (IITILVTATASSVGAAGIPAGGVLTLAIILEAVN). At 449–461 (LPVDHISLILAVD) the chain is on the extracellular side. The chain crosses the membrane as a helical span at residues 462–483 (WLVDRSCTVLNVEGDALGAGLL). Na(+) contacts are provided by Asn-472 and Asp-476. The Cytoplasmic segment spans residues 484–542 (QNYVDRTEVRSTEPELIQVKSELPLDPLPAPTEEGNPLLRHYRGPAGDATVASEKESVM). Ser-494 bears the Phosphoserine mark. Residue Thr-495 is modified to Phosphothreonine. Phosphoserine occurs at positions 504, 536, and 540. The tract at residues 509–542 (DPLPAPTEEGNPLLRHYRGPAGDATVASEKESVM) is disordered.

Belongs to the dicarboxylate/amino acid:cation symporter (DAACS) (TC 2.A.23) family. SLC1A5 subfamily. Homotrimer.

The protein localises to the cell membrane. Its subcellular location is the melanosome. The catalysed reaction is L-glutamine(out) + L-serine(in) + Na(+)(out) = L-glutamine(in) + L-serine(out) + Na(+)(in). It carries out the reaction L-glutamine(in) + L-serine(out) + Na(+)(out) = L-glutamine(out) + L-serine(in) + Na(+)(in). The enzyme catalyses L-threonine(in) + L-glutamine(out) + Na(+)(out) = L-threonine(out) + L-glutamine(in) + Na(+)(in). It catalyses the reaction L-threonine(out) + L-glutamine(in) + Na(+)(out) = L-threonine(in) + L-glutamine(out) + Na(+)(in). The catalysed reaction is L-asparagine(in) + L-glutamine(out) + Na(+)(out) = L-asparagine(out) + L-glutamine(in) + Na(+)(in). It carries out the reaction L-asparagine(out) + L-glutamine(in) + Na(+)(out) = L-asparagine(in) + L-glutamine(out) + Na(+)(in). The enzyme catalyses L-glutamine(in) + L-alanine(out) + Na(+)(out) = L-glutamine(out) + L-alanine(in) + Na(+)(in). It catalyses the reaction L-valine(out) + L-glutamine(in) + Na(+)(out) = L-valine(in) + L-glutamine(out) + Na(+)(in). The catalysed reaction is L-glutamine(in) + L-methionine(out) + Na(+)(out) = L-glutamine(out) + L-methionine(in) + Na(+)(in). It carries out the reaction L-glutamine(in) + L-glutamate(out) + Na(+)(out) + H(+)(out) = L-glutamine(out) + L-glutamate(in) + Na(+)(in) + H(+)(in). The enzyme catalyses D-serine(in) + L-glutamine(out) + Na(+)(out) = D-serine(out) + L-glutamine(in) + Na(+)(in). It catalyses the reaction D-serine(in) + L-alanine(out) + Na(+)(out) = D-serine(out) + L-alanine(in) + Na(+)(in). The catalysed reaction is nitrate(in) = nitrate(out). It carries out the reaction iodide(out) = iodide(in). The enzyme catalyses thiocyanate(in) = thiocyanate(out). Its function is as follows. Sodium-coupled antiporter of neutral amino acids. In a tri-substrate transport cycle, exchanges neutral amino acids between the extracellular and intracellular compartments, coupled to the inward cotransport of at least one sodium ion. The preferred substrate is the essential amino acid L-glutamine, a precursor for biosynthesis of proteins, nucleotides and amine sugars as well as an alternative fuel for mitochondrial oxidative phosphorylation. Exchanges L-glutamine with other neutral amino acids such as L-serine, L-threonine and L-asparagine in a bidirectional way. Provides L-glutamine to proliferating stem and activated cells driving the metabolic switch toward cell differentiation. The transport cycle is usually pH-independent, with the exception of L-glutamate. Transports extracellular L-glutamate coupled to the cotransport of one proton and one sodium ion in exchange for intracellular L-glutamine counter-ion. May provide for L-glutamate uptake in glial cells regulating glutamine/glutamate cycle in the nervous system. Can transport D-amino acids. Mediates D-serine release from the retinal glia potentially affecting NMDA receptor function in retinal neurons. Displays sodium- and amino acid-dependent but uncoupled channel-like anion conductance with a preference SCN(-) &gt;&gt; NO3(-) &gt; I(-) &gt; Cl(-). Through binding of the fusogenic protein syncytin-1/ERVW-1 may mediate trophoblasts syncytialization, the spontaneous fusion of their plasma membranes, an essential process in placental development. The polypeptide is Neutral amino acid transporter B(0) (SLC1A5) (Macaca fascicularis (Crab-eating macaque)).